Reading from the N-terminus, the 957-residue chain is Sorting nexin-13 (957 aa).

Positions 97–284 (ANIIDEPLQQ…YVIWMIRDSN (188 aa)) constitute a PXA domain. Residues 373–511 (PLDSILVDNV…SFRQNALYVR (139 aa)) enclose the RGS domain. One can recognise a PX domain in the interval 559–680 (VQLHAYISDT…DFLENKAYSK (122 aa)). The a 1,2-diacyl-sn-glycero-3-phospho-(1D-myo-inositol-3-phosphate) site is built by Arg601, Ser603, Lys628, and Arg642.

This sequence belongs to the sorting nexin family.

Its subcellular location is the early endosome membrane. Its function is as follows. May be involved in several stages of intracellular trafficking. Acts as a GAP for Galphas. May play a role in endosome homeostasis. The sequence is that of Sorting nexin-13 (Snx13) from Mus musculus (Mouse).